The chain runs to 218 residues: Cytidylate kinase (218 aa).

Position 11–19 (11–19 (GPGASGKGT)) interacts with ATP.

This sequence belongs to the cytidylate kinase family. Type 1 subfamily.

It localises to the cytoplasm. The enzyme catalyses CMP + ATP = CDP + ADP. The catalysed reaction is dCMP + ATP = dCDP + ADP. The protein is Cytidylate kinase of Neisseria meningitidis serogroup A / serotype 4A (strain DSM 15465 / Z2491).